Here is a 149-residue protein sequence, read N- to C-terminus: Urease accessory protein UreE (149 aa).

This sequence belongs to the UreE family.

The protein resides in the cytoplasm. Involved in urease metallocenter assembly. Binds nickel. Probably functions as a nickel donor during metallocenter assembly. This chain is Urease accessory protein UreE, found in Prochlorococcus marinus (strain MIT 9215).